The chain runs to 119 residues: Acidic phospholipase A2 CM-II (119 aa).

7 disulfide bridges follow: Cys11–Cys71, Cys26–Cys118, Cys28–Cys44, Cys43–Cys99, Cys50–Cys92, Cys60–Cys85, and Cys78–Cys90. Ca(2+)-binding residues include Phe27, Gly29, and Gly31. The active site involves His47. Ca(2+) is bound at residue Asp48. Asp93 is an active-site residue.

The protein belongs to the phospholipase A2 family. Group I subfamily. D49 sub-subfamily. The cofactor is Ca(2+). In terms of tissue distribution, expressed by the venom gland.

The protein resides in the secreted. It catalyses the reaction a 1,2-diacyl-sn-glycero-3-phosphocholine + H2O = a 1-acyl-sn-glycero-3-phosphocholine + a fatty acid + H(+). In terms of biological role, PLA2 catalyzes the calcium-dependent hydrolysis of the 2-acyl groups in 3-sn-phosphoglycerides. This Aspidelaps scutatus (Shield-nose snake) protein is Acidic phospholipase A2 CM-II.